A 256-amino-acid polypeptide reads, in one-letter code: Protein YABBY 4 (256 aa).

The segment at 30 to 57 (CNCCDTILAVGVPCSSLFKTVTVRCGHC) adopts a C4-type zinc-finger fold. Residues 127 to 168 (SCASNAPAMQMPPAKPVQQEPELPKNAPASANRPPEKRQRVP) are disordered.

The protein belongs to the YABBY family. In terms of tissue distribution, preferentially expressed in immature organs containing meristems and organ primordia. Expressed in phloem of developing vascular tissues of young seedling shoots. Expressed in the phloem of midvein vasculature of young leaves. Does not show polar expression pattern in leaf primordia.

It localises to the nucleus. In terms of biological role, seems to be associated with phloem cell differentiation. This chain is Protein YABBY 4 (YAB4), found in Oryza sativa subsp. japonica (Rice).